We begin with the raw amino-acid sequence, 155 residues long: Cytochrome c-type biogenesis protein CcmE (155 aa).

At 1-7 (MTRKQKR) the chain is on the cytoplasmic side. Residues 8–28 (LVVIAGGMSFILAAVLLVMFA) form a helical; Signal-anchor for type II membrane protein membrane-spanning segment. The Periplasmic portion of the chain corresponds to 29–155 (FSQSVAYFYM…GKGQEAKATP (127 aa)). Heme-binding residues include His-124 and Tyr-128.

Belongs to the CcmE/CycJ family.

It localises to the cell inner membrane. Heme chaperone required for the biogenesis of c-type cytochromes. Transiently binds heme delivered by CcmC and transfers the heme to apo-cytochromes in a process facilitated by CcmF and CcmH. This is Cytochrome c-type biogenesis protein CcmE from Rhizobium etli (strain ATCC 51251 / DSM 11541 / JCM 21823 / NBRC 15573 / CFN 42).